The chain runs to 212 residues: Thiamine-phosphate synthase (212 aa).

Residues 39–43 (QLREK) and asparagine 71 each bind 4-amino-2-methyl-5-(diphosphooxymethyl)pyrimidine. The Mg(2+) site is built by aspartate 72 and aspartate 91. Serine 110 contacts 4-amino-2-methyl-5-(diphosphooxymethyl)pyrimidine. A 2-[(2R,5Z)-2-carboxy-4-methylthiazol-5(2H)-ylidene]ethyl phosphate-binding site is contributed by 137–139 (TPT). Lysine 140 contributes to the 4-amino-2-methyl-5-(diphosphooxymethyl)pyrimidine binding site. A 2-[(2R,5Z)-2-carboxy-4-methylthiazol-5(2H)-ylidene]ethyl phosphate-binding site is contributed by glycine 168.

The protein belongs to the thiamine-phosphate synthase family. Requires Mg(2+) as cofactor.

The enzyme catalyses 2-[(2R,5Z)-2-carboxy-4-methylthiazol-5(2H)-ylidene]ethyl phosphate + 4-amino-2-methyl-5-(diphosphooxymethyl)pyrimidine + 2 H(+) = thiamine phosphate + CO2 + diphosphate. It carries out the reaction 2-(2-carboxy-4-methylthiazol-5-yl)ethyl phosphate + 4-amino-2-methyl-5-(diphosphooxymethyl)pyrimidine + 2 H(+) = thiamine phosphate + CO2 + diphosphate. It catalyses the reaction 4-methyl-5-(2-phosphooxyethyl)-thiazole + 4-amino-2-methyl-5-(diphosphooxymethyl)pyrimidine + H(+) = thiamine phosphate + diphosphate. The protein operates within cofactor biosynthesis; thiamine diphosphate biosynthesis; thiamine phosphate from 4-amino-2-methyl-5-diphosphomethylpyrimidine and 4-methyl-5-(2-phosphoethyl)-thiazole: step 1/1. Its function is as follows. Condenses 4-methyl-5-(beta-hydroxyethyl)thiazole monophosphate (THZ-P) and 2-methyl-4-amino-5-hydroxymethyl pyrimidine pyrophosphate (HMP-PP) to form thiamine monophosphate (TMP). This chain is Thiamine-phosphate synthase, found in Acidothermus cellulolyticus (strain ATCC 43068 / DSM 8971 / 11B).